We begin with the raw amino-acid sequence, 220 residues long: Deoxyribose-phosphate aldolase 1 (220 aa).

Catalysis depends on Asp89, which acts as the Proton donor/acceptor. Catalysis depends on Lys151, which acts as the Schiff-base intermediate with acetaldehyde. The active-site Proton donor/acceptor is the Lys180.

The protein belongs to the DeoC/FbaB aldolase family. DeoC type 1 subfamily.

The protein resides in the cytoplasm. It carries out the reaction 2-deoxy-D-ribose 5-phosphate = D-glyceraldehyde 3-phosphate + acetaldehyde. Its pathway is carbohydrate degradation; 2-deoxy-D-ribose 1-phosphate degradation; D-glyceraldehyde 3-phosphate and acetaldehyde from 2-deoxy-alpha-D-ribose 1-phosphate: step 2/2. Its function is as follows. Catalyzes a reversible aldol reaction between acetaldehyde and D-glyceraldehyde 3-phosphate to generate 2-deoxy-D-ribose 5-phosphate. This Staphylococcus aureus (strain COL) protein is Deoxyribose-phosphate aldolase 1.